The primary structure comprises 509 residues: 2-succinyl-5-enolpyruvyl-6-hydroxy-3-cyclohexene-1-carboxylate synthase (509 aa).

The protein belongs to the TPP enzyme family. MenD subfamily. As to quaternary structure, homodimer. Mg(2+) serves as cofactor. It depends on Mn(2+) as a cofactor. The cofactor is thiamine diphosphate.

The enzyme catalyses isochorismate + 2-oxoglutarate + H(+) = 5-enolpyruvoyl-6-hydroxy-2-succinyl-cyclohex-3-ene-1-carboxylate + CO2. It functions in the pathway quinol/quinone metabolism; 1,4-dihydroxy-2-naphthoate biosynthesis; 1,4-dihydroxy-2-naphthoate from chorismate: step 2/7. Its pathway is quinol/quinone metabolism; menaquinone biosynthesis. Its function is as follows. Catalyzes the thiamine diphosphate-dependent decarboxylation of 2-oxoglutarate and the subsequent addition of the resulting succinic semialdehyde-thiamine pyrophosphate anion to isochorismate to yield 2-succinyl-5-enolpyruvyl-6-hydroxy-3-cyclohexene-1-carboxylate (SEPHCHC). This is 2-succinyl-5-enolpyruvyl-6-hydroxy-3-cyclohexene-1-carboxylate synthase from Corynebacterium diphtheriae (strain ATCC 700971 / NCTC 13129 / Biotype gravis).